An 84-amino-acid polypeptide reads, in one-letter code: UPF0291 protein SMU_447 (84 aa).

Residues 57-84 (EGNDITPAKLKEIQRQKGIHGRKPEDNS) are disordered.

Belongs to the UPF0291 family.

It is found in the cytoplasm. The chain is UPF0291 protein SMU_447 from Streptococcus mutans serotype c (strain ATCC 700610 / UA159).